We begin with the raw amino-acid sequence, 244 residues long: uncharacterized protein (244 aa).

6 helical membrane passes run 21–41 (FPYSVPMIAGFLFLGIAYGIY), 44–64 (ALGFGFLYPTLMALLIYAGSV), 66–86 (FIAAGALIAPFSPISVLLITL), 139–159 (WYMFFVSLYLHIYWVLGAAMG), 165–185 (VLPFNLKGVEFSMTALFLVIF), and 199–219 (LLGLGIALVFLLIIGKEYFLI).

It belongs to the AzlC family.

Its subcellular location is the cell membrane. This is an uncharacterized protein from Haemophilus influenzae (strain ATCC 51907 / DSM 11121 / KW20 / Rd).